Consider the following 228-residue polypeptide: Cytidylate kinase (228 aa).

17–25 serves as a coordination point for ATP; that stretch reads GPTASGKGT.

It belongs to the cytidylate kinase family. Type 1 subfamily.

It localises to the cytoplasm. The enzyme catalyses CMP + ATP = CDP + ADP. The catalysed reaction is dCMP + ATP = dCDP + ADP. The protein is Cytidylate kinase of Paraburkholderia phymatum (strain DSM 17167 / CIP 108236 / LMG 21445 / STM815) (Burkholderia phymatum).